Consider the following 152-residue polypeptide: Protein SprT-like (152 aa).

Residues 7-147 (QRLVEEVSLQ…CGKCKGKLKP (141 aa)) enclose the SprT-like domain. A Zn(2+)-binding site is contributed by H67. Residue E68 is part of the active site. H71 lines the Zn(2+) pocket.

The protein belongs to the SprT family. Zn(2+) is required as a cofactor.

It localises to the cytoplasm. This chain is Protein SprT-like, found in Bacillus cereus (strain G9842).